The following is a 41-amino-acid chain: Cuticle protein 32 (41 aa).

4 repeat units span residues 17–20, 25–28, 31–34, and 38–41.

Component of the cuticle of migratory locust which contains more than 100 different structural proteins. The sequence is that of Cuticle protein 32 from Locusta migratoria (Migratory locust).